The following is a 327-amino-acid chain: GTP 3',8-cyclase (327 aa).

In terms of domain architecture, Radical SAM core spans 8-232 (AFARKFYYLR…LQRSRSDGPA (225 aa)). Residue Arg17 coordinates GTP. Residues Cys24 and Cys28 each contribute to the [4Fe-4S] cluster site. Tyr30 provides a ligand contact to S-adenosyl-L-methionine. Cys31 lines the [4Fe-4S] cluster pocket. GTP is bound at residue Arg66. Gly70 serves as a coordination point for S-adenosyl-L-methionine. Residue Thr97 coordinates GTP. Ser121 contacts S-adenosyl-L-methionine. Residue Lys158 coordinates GTP. S-adenosyl-L-methionine is bound at residue Met192. [4Fe-4S] cluster-binding residues include Cys255 and Cys258. 260 to 262 (RLR) provides a ligand contact to GTP. Cys272 serves as a coordination point for [4Fe-4S] cluster.

This sequence belongs to the radical SAM superfamily. MoaA family. As to quaternary structure, monomer and homodimer. It depends on [4Fe-4S] cluster as a cofactor.

The catalysed reaction is GTP + AH2 + S-adenosyl-L-methionine = (8S)-3',8-cyclo-7,8-dihydroguanosine 5'-triphosphate + 5'-deoxyadenosine + L-methionine + A + H(+). It participates in cofactor biosynthesis; molybdopterin biosynthesis. Its function is as follows. Catalyzes the cyclization of GTP to (8S)-3',8-cyclo-7,8-dihydroguanosine 5'-triphosphate. This is GTP 3',8-cyclase from Photorhabdus laumondii subsp. laumondii (strain DSM 15139 / CIP 105565 / TT01) (Photorhabdus luminescens subsp. laumondii).